The primary structure comprises 272 residues: tRNA pseudouridine synthase A (272 aa).

Residue aspartate 51 is the Nucleophile of the active site. Residue tyrosine 109 participates in substrate binding.

The protein belongs to the tRNA pseudouridine synthase TruA family. Homodimer.

The enzyme catalyses uridine(38/39/40) in tRNA = pseudouridine(38/39/40) in tRNA. Its function is as follows. Formation of pseudouridine at positions 38, 39 and 40 in the anticodon stem and loop of transfer RNAs. The polypeptide is tRNA pseudouridine synthase A (Verminephrobacter eiseniae (strain EF01-2)).